The primary structure comprises 434 residues: N-acylneuraminate cytidylyltransferase (434 aa).

M1 carries the post-translational modification N-acetylmethionine. Residues 1–42 (MDSVEKGAATSVSNPRGRPSRGRPPKLQRNSRGGQGRGVEKP) are disordered. A BC1 motif motif is present at residues 15-31 (PRGRPSRGRPPKLQRNS). Residues R37 and R52 each carry the omega-N-methylarginine modification. 6 residues coordinate substrate: R52, N62, R111, S120, S122, and Q143. A BC2 motif motif is present at residues 200-206 (KRPRRQD). Residue R201 is part of the active site. The short motif at 269–276 (KEKLKEIK) is the BC3 motif element.

It belongs to the CMP-NeuNAc synthase family. In terms of assembly, homotetramer; the active enzyme is formed by a dimer of dimers. Ubiquitously expressed. Expressed in pancreas, kidney, liver, skeletal muscle, lung, placenta, brain, heart, colon, PBL, small intestine, ovary, testis, prostate, thymus and spleen.

The protein localises to the nucleus. The catalysed reaction is an N-acylneuraminate + CTP = a CMP-N-acyl-beta-neuraminate + diphosphate. Its pathway is amino-sugar metabolism; N-acetylneuraminate metabolism. In terms of biological role, catalyzes the activation of N-acetylneuraminic acid (NeuNAc) to cytidine 5'-monophosphate N-acetylneuraminic acid (CMP-NeuNAc), a substrate required for the addition of sialic acid. Has some activity toward NeuNAc, N-glycolylneuraminic acid (Neu5Gc) or 2-keto-3-deoxy-D-glycero-D-galacto-nononic acid (KDN). The sequence is that of N-acylneuraminate cytidylyltransferase (CMAS) from Homo sapiens (Human).